The primary structure comprises 311 residues: Porphobilinogen deaminase (311 aa).

Position 243 is an S-(dipyrrolylmethanemethyl)cysteine (Cys-243).

Belongs to the HMBS family. In terms of assembly, monomer. Dipyrromethane is required as a cofactor.

It carries out the reaction 4 porphobilinogen + H2O = hydroxymethylbilane + 4 NH4(+). Its pathway is porphyrin-containing compound metabolism; protoporphyrin-IX biosynthesis; coproporphyrinogen-III from 5-aminolevulinate: step 2/4. In terms of biological role, tetrapolymerization of the monopyrrole PBG into the hydroxymethylbilane pre-uroporphyrinogen in several discrete steps. The chain is Porphobilinogen deaminase from Blochmanniella floridana.